The chain runs to 145 residues: Mannitol-specific phosphotransferase enzyme IIA component (145 aa).

The PTS EIIA type-2 domain occupies 4–143 (TILSTETIKV…QEVLAFLGEV (140 aa)). His-64 serves as the catalytic Tele-phosphohistidine intermediate. Residue His-64 is modified to Phosphohistidine; by HPr.

The protein localises to the cytoplasm. The phosphoenolpyruvate-dependent sugar phosphotransferase system (sugar PTS), a major carbohydrate active transport system, catalyzes the phosphorylation of incoming sugar substrates concomitantly with their translocation across the cell membrane. The enzyme II CmtAB PTS system is involved in D-mannitol transport. The sequence is that of Mannitol-specific phosphotransferase enzyme IIA component (mtlF) from Halalkalibacterium halodurans (strain ATCC BAA-125 / DSM 18197 / FERM 7344 / JCM 9153 / C-125) (Bacillus halodurans).